The chain runs to 375 residues: DNA replication and repair protein RecF (375 aa).

30–37 (GENAQGKT) provides a ligand contact to ATP.

It belongs to the RecF family.

The protein localises to the cytoplasm. The RecF protein is involved in DNA metabolism; it is required for DNA replication and normal SOS inducibility. RecF binds preferentially to single-stranded, linear DNA. It also seems to bind ATP. The chain is DNA replication and repair protein RecF from Bacillus thuringiensis (strain Al Hakam).